We begin with the raw amino-acid sequence, 446 residues long: Alkylglycerol monooxygenase (446 aa).

Helical transmembrane passes span 43–63 (ATVY…AWKG) and 110–130 (WDSP…YYWF). One can recognise a Fatty acid hydroxylase domain in the interval 118–248 (LTFLGVDFGY…LIIWDRMFGT (131 aa)). The Histidine box-1 motif lies at 131-135 (HRMAH). Residues 144–148 (HQTHH) carry the Histidine box-2 motif. The helical transmembrane segment at 167 to 187 (YFSWMFYWPMAFCIPPSVFAV) threads the bilayer. The Histidine box-3 motif lies at 220–224 (HRVHH). The next 3 helical transmembrane spans lie at 339 to 359 (MMHF…KLIL), 362 to 382 (ATLL…GFIF), and 412 to 434 (VPYL…GLKA).

Belongs to the sterol desaturase family. TMEM195 subfamily. It depends on Fe cation as a cofactor.

It localises to the endoplasmic reticulum membrane. It catalyses the reaction 1-O-(1,2-saturated-alkyl)-sn-glycerol + (6R)-L-erythro-5,6,7,8-tetrahydrobiopterin + O2 = a 1-(1-hydroxyalkyl)-sn-glycerol + (6R)-L-erythro-6,7-dihydrobiopterin + H2O. In terms of biological role, glyceryl-ether monooxygenase that cleaves the O-alkyl bond of ether lipids. Ether lipids are essential components of brain membranes. The protein is Alkylglycerol monooxygenase (agmo) of Xenopus tropicalis (Western clawed frog).